A 934-amino-acid chain; its full sequence is Serine/threonine-protein kinase PknD (934 aa).

The Protein kinase domain maps to 4–296 (YELIRLIGRG…ELRKALQPHL (293 aa)). Residues 10–18 (IGRGGMGEV) and Lys-33 each bind ATP. Asp-138 serves as the catalytic Proton acceptor.

The protein belongs to the protein kinase superfamily. Ser/Thr protein kinase family. Post-translationally, autophosphorylated on serine and threonine residues.

The catalysed reaction is L-seryl-[protein] + ATP = O-phospho-L-seryl-[protein] + ADP + H(+). It catalyses the reaction L-threonyl-[protein] + ATP = O-phospho-L-threonyl-[protein] + ADP + H(+). Together with the serine/threonine kinase Pkn1, may play a role in the specific interactions with host proteins during intracellular growth. The protein is Serine/threonine-protein kinase PknD of Chlamydia muridarum (strain MoPn / Nigg).